A 31-amino-acid chain; its full sequence is Zinc metalloproteinase alsophinase (31 aa).

Residue Q1 is modified to Pyrrolidone carboxylic acid. The region spanning 9–31 (KYIEFYLVVDNGMFXKYSXXFTV) is the Peptidase M12B domain. Position 12 (E12) interacts with Ca(2+).

Monomer. Zn(2+) is required as a cofactor. Post-translationally, contains 9 disulfide bonds. In terms of tissue distribution, expressed by the venom gland.

The protein localises to the secreted. Its activity is regulated as follows. Inhibited by 1,10-phenanthroline. Functionally, snake venom zinc metalloprotease that has potent hemorrhagic activity, fibrinogenolytic activity on the alpha-subunit of human fibrinogen (FGA) in vitro and provokes necrosis in skin, muscle and lung tissues. May contribute to local edema and ecchymosis induced by venom. Hydrolyzes model substrate (beta-chain of insulin) at Ala(14)-Leu(15). This chain is Zinc metalloproteinase alsophinase, found in Borikenophis portoricensis (Puerto Rican racer).